A 163-amino-acid chain; its full sequence is MYISKQPFRKSKQPFRKSKQPFHKSKQPFRKFKQPFRKSKQPFRRRSRIGPGDRIDYRNMSLINRFISEQGKILSRRINRLTLKQQRLITLAIKQARILSFLPFRNYENEKQFQAQAISIITGPRHRKNRHIPQLTQKFNSNRNLRNSNQNLRNNNRNLSSDC.

2 disordered regions span residues 1–52 (MYIS…IGPG) and 144–163 (NLRN…SSDC). A compositionally biased stretch (basic residues) spans 7–48 (PFRKSKQPFRKSKQPFHKSKQPFRKFKQPFRKSKQPFRRRSR).

This sequence belongs to the bacterial ribosomal protein bS18 family. In terms of assembly, part of the 30S ribosomal subunit.

Its subcellular location is the plastid. It is found in the chloroplast. In Saccharum hybrid (Sugarcane), this protein is Small ribosomal subunit protein bS18c.